The sequence spans 214 residues: Thiopurine S-methyltransferase (214 aa).

Tryptophan 10, leucine 44, glutamate 65, and arginine 122 together coordinate S-adenosyl-L-methionine.

The protein belongs to the class I-like SAM-binding methyltransferase superfamily. TPMT family.

The protein resides in the cytoplasm. The catalysed reaction is S-adenosyl-L-methionine + a thiopurine = S-adenosyl-L-homocysteine + a thiopurine S-methylether.. In Teredinibacter turnerae (strain ATCC 39867 / T7901), this protein is Thiopurine S-methyltransferase.